The chain runs to 268 residues: MDRYQHLFQRLAAHNQGAFVPFVTIGDPNPQQSLRIMQTLVEAGADALELGIPFSDPLADGPTIQGAISALDSGTKPIRCFEADQAPIRAQDIPIYLLMYANLVYARGIDNFYQRCQQAGVDSVLIADVPTNESAEFGPAAKKYAIHPIFIAPPTASDETLQSVAELGSGYTYLLSRSGVTGAETKANMPVHALLERLNQFSAPPRRLGFGISEPEQVKQAIESGAAGAISGSAVVKIIEHHLAKPEAMLAELKTFVSAMKSATKHDK.

Active-site proton acceptor residues include glutamate 49 and aspartate 60.

Belongs to the TrpA family. As to quaternary structure, tetramer of two alpha and two beta chains.

The enzyme catalyses (1S,2R)-1-C-(indol-3-yl)glycerol 3-phosphate + L-serine = D-glyceraldehyde 3-phosphate + L-tryptophan + H2O. The protein operates within amino-acid biosynthesis; L-tryptophan biosynthesis; L-tryptophan from chorismate: step 5/5. Its function is as follows. The alpha subunit is responsible for the aldol cleavage of indoleglycerol phosphate to indole and glyceraldehyde 3-phosphate. The polypeptide is Tryptophan synthase alpha chain (Vibrio metschnikovii).